A 447-amino-acid chain; its full sequence is Phosphoglucosamine mutase (447 aa).

The active-site Phosphoserine intermediate is the serine 100. 4 residues coordinate Mg(2+): serine 100, aspartate 239, aspartate 241, and aspartate 243. Serine 100 is modified (phosphoserine).

The protein belongs to the phosphohexose mutase family. Mg(2+) serves as cofactor. Post-translationally, activated by phosphorylation.

It carries out the reaction alpha-D-glucosamine 1-phosphate = D-glucosamine 6-phosphate. Catalyzes the conversion of glucosamine-6-phosphate to glucosamine-1-phosphate. This chain is Phosphoglucosamine mutase, found in Caldanaerobacter subterraneus subsp. tengcongensis (strain DSM 15242 / JCM 11007 / NBRC 100824 / MB4) (Thermoanaerobacter tengcongensis).